The primary structure comprises 499 residues: DAZ protein 1 (499 aa).

Residues 1–29 (MMSPPLRYQKDQQNQQHQQNQSQQAAHQM) are disordered. Over residues 12–28 (QQNQQHQQNQSQQAAHQ) the composition is skewed to low complexity. Residues 66-144 (PNRIFVGGFP…SRKLNLGPAI (79 aa)) form the RRM domain. A compositionally biased stretch (low complexity) spans 195–224 (FVYPPLRSQDQSRQQSEQQTTPQNSPTNLQ). 2 disordered regions span residues 195 to 304 (FVYP…NNGG) and 406 to 499 (YPGN…TKNN). A DAZ domain is found at 214-236 (TTPQNSPTNLQHQQSPQVFFGGD). A compositionally biased stretch (basic and acidic residues) spans 251–262 (EKSEVSPEKHES). The segment covering 263–279 (VSPQPLLPNQNVLNTQY) has biased composition (polar residues). The segment covering 280 to 304 (SQGQQQWNSNVQQQQQQQMDSNNGG) has biased composition (low complexity). Polar residues predominate over residues 406–425 (YPGNFSQQHTMGNNENTFSL). A compositionally biased stretch (basic and acidic residues) spans 438–447 (KPSECQDKKT). Residues 480–499 (LSPLSASLQSLAISSPTKNN) are compositionally biased toward low complexity.

This sequence belongs to the RRM DAZ family. As to expression, germline specific. More strongly expressed during oogenesis than during spermatogenesis. During the larval stages, it is more abundant at the distal region than the proximal region of the gonad. In young adult hermaphrodites, it is expressed at a very low level in the distal mitotic region of the gonad, and begins to accumulate in the meiotic transition zone. Highly expressed in the proximal pachytene region. Not expressed in mature oocytes. Not expressed in the spermatheca. Weakly or not expressed in the germline of adult males.

In terms of biological role, RNA-binding protein that plays a central role in oogenesis, but not for spermatogenesis. Required for meiotic entry and germline differentiation, at the pachytene stage of meiosis I of female germline regardless of the sex of the soma. May act by regulating translation of specific mRNAs, possibly by binding to their 3'-UTR. The chain is DAZ protein 1 (daz-1) from Caenorhabditis elegans.